A 297-amino-acid polypeptide reads, in one-letter code: Homoserine kinase (297 aa).

Position 82–92 (P82–A92) interacts with ATP.

Belongs to the GHMP kinase family. Homoserine kinase subfamily.

Its subcellular location is the cytoplasm. The enzyme catalyses L-homoserine + ATP = O-phospho-L-homoserine + ADP + H(+). It participates in amino-acid biosynthesis; L-threonine biosynthesis; L-threonine from L-aspartate: step 4/5. In terms of biological role, catalyzes the ATP-dependent phosphorylation of L-homoserine to L-homoserine phosphate. This is Homoserine kinase from Clostridium botulinum (strain ATCC 19397 / Type A).